A 286-amino-acid chain; its full sequence is Transcription factor MYB62 (286 aa).

2 HTH myb-type domains span residues 16–68 (DEEL…LNYL) and 69–123 (KPDI…QKQA). DNA-binding regions (H-T-H motif) lie at residues 44–68 (WNHV…LNYL) and 96–119 (WSKI…RTRV).

In terms of tissue distribution, expressed in leaves and flowers.

It localises to the nucleus. Transcription repressor of phosphate (Pi) starvation-induced genes. Negatively regulates Pi starvation responses via the repression of gibberellic acid (GA) biosynthesis and signaling. Modulates root architecture, phosphatase activity, and Pi uptake and accumulation. The protein is Transcription factor MYB62 of Arabidopsis thaliana (Mouse-ear cress).